Here is a 333-residue protein sequence, read N- to C-terminus: Oxidoreductase AN1596 (333 aa).

Belongs to the NmrA-type oxidoreductase family.

Its pathway is secondary metabolite biosynthesis; terpenoid biosynthesis. Oxidoreductase; part of the gene cluster that mediates the biosynthesis of the diterpene ent-pimara-8(14),15-diene (PD). Within the cluster, the HMG-CoA reductase AN1593 functions in the mevalonate pathway, which produces isoprenoid precursors. The geranylgeranyl pyrophosphate (GGPP) synthase AN1592 is needed in the formation of GGPP, the precursor for diterpenes. Lastly, the pimaradiene synthase pbcA performs the 2 cyclization steps that convert GGPP to ent-pimara-8(14),15-diene. The putative roles of the remaining cluster enzymes in ent-pimara-8(14),15-diene biosynthesis is unclear. The cytochrome P450 monooxygenase AN1598, the glutathione S-transferase AN1595, the oxidoreductases AN1596 and AN1597 probably function as decorative enzymes. It is possible that in biological conditions the compound is oxidized to ent-pimara-8(14),15-dien-19-oic acid, which is a bioactive diterpene compound predominant in many plant extracts. This is Oxidoreductase AN1596 from Emericella nidulans (strain FGSC A4 / ATCC 38163 / CBS 112.46 / NRRL 194 / M139) (Aspergillus nidulans).